The chain runs to 154 residues: Aspartate carbamoyltransferase regulatory chain (154 aa).

Residues Cys-109, Cys-114, Cys-138, and Cys-141 each coordinate Zn(2+).

The protein belongs to the PyrI family. Contains catalytic and regulatory chains. Zn(2+) serves as cofactor.

Its function is as follows. Involved in allosteric regulation of aspartate carbamoyltransferase. The polypeptide is Aspartate carbamoyltransferase regulatory chain (Aeromonas salmonicida (strain A449)).